A 91-amino-acid polypeptide reads, in one-letter code: Chorion class B protein M3A5 (91 aa).

Positions 1-51 (VASENRYEGTVGVSGNLPFLGTADVAGEFPTAGIGEILYGCGNGAVGITRE) are central domain. Positions 52–91 (GGLGYGAGYGGGYGLGYGGYGGGYGLGYGGYGGCGCGCGY) are right arm (Gly-rich tandem repeats).

This sequence belongs to the chorion protein family.

In terms of biological role, this protein is one of many from the eggshell of the silk moth. The protein is Chorion class B protein M3A5 of Bombyx mori (Silk moth).